An 83-amino-acid chain; its full sequence is Small ribosomal subunit protein bS20 (83 aa).

The tract at residues 1–21 (MPNIKSAIKRVRTTETAEERN) is disordered. Basic and acidic residues predominate over residues 12 to 21 (RTTETAEERN).

The protein belongs to the bacterial ribosomal protein bS20 family.

Binds directly to 16S ribosomal RNA. The sequence is that of Small ribosomal subunit protein bS20 from Staphylococcus epidermidis (strain ATCC 35984 / DSM 28319 / BCRC 17069 / CCUG 31568 / BM 3577 / RP62A).